We begin with the raw amino-acid sequence, 249 residues long: 3-deoxy-D-manno-octulosonic acid kinase (249 aa).

D175 is a catalytic residue.

Belongs to the protein kinase superfamily. KdkA/RfaP family.

The protein localises to the cell inner membrane. The catalysed reaction is an alpha-Kdo-(2-&gt;6)-lipid IVA + ATP = a 4-O-phospho-alpha-Kdo-(2-&gt;6)-lipid IVA + ADP + H(+). It functions in the pathway bacterial outer membrane biogenesis; LPS core biosynthesis. Catalyzes the ATP-dependent phosphorylation of the 3-deoxy-D-manno-octulosonic acid (Kdo) residue in Kdo-lipid IV(A) at the 4-OH position. In Stenotrophomonas maltophilia (strain R551-3), this protein is 3-deoxy-D-manno-octulosonic acid kinase.